Here is a 176-residue protein sequence, read N- to C-terminus: Jacalin-related lectin 19 (176 aa).

One can recognise a Jacalin-type lectin domain in the interval 12 to 154 (TVFVGPWGGN…LDSIGFHLSR (143 aa)).

Belongs to the jacalin lectin family.

The chain is Jacalin-related lectin 19 (JAL19) from Arabidopsis thaliana (Mouse-ear cress).